Consider the following 477-residue polypeptide: Glycogen synthase (477 aa).

Lys15 is an ADP-alpha-D-glucose binding site.

This sequence belongs to the glycosyltransferase 1 family. Bacterial/plant glycogen synthase subfamily.

The enzyme catalyses [(1-&gt;4)-alpha-D-glucosyl](n) + ADP-alpha-D-glucose = [(1-&gt;4)-alpha-D-glucosyl](n+1) + ADP + H(+). It functions in the pathway glycan biosynthesis; glycogen biosynthesis. In terms of biological role, synthesizes alpha-1,4-glucan chains using ADP-glucose. The sequence is that of Glycogen synthase (glgA) from Salmonella typhimurium (strain LT2 / SGSC1412 / ATCC 700720).